The chain runs to 362 residues: Adenosine deaminase (362 aa).

The Zn(2+) site is built by histidine 19 and histidine 21. The substrate site is built by histidine 21, aspartate 23, and glycine 181. Residue histidine 208 coordinates Zn(2+). Glutamate 211 acts as the Proton donor in catalysis. A Zn(2+)-binding site is contributed by aspartate 300.

Belongs to the metallo-dependent hydrolases superfamily. Adenosine and AMP deaminases family. Adenosine deaminase subfamily. Requires Zn(2+) as cofactor.

It catalyses the reaction adenosine + H2O + H(+) = inosine + NH4(+). The catalysed reaction is 2'-deoxyadenosine + H2O + H(+) = 2'-deoxyinosine + NH4(+). Its function is as follows. Catalyzes the hydrolytic deamination of adenosine and 2-deoxyadenosine. This chain is Adenosine deaminase, found in Mycobacteroides abscessus (strain ATCC 19977 / DSM 44196 / CCUG 20993 / CIP 104536 / JCM 13569 / NCTC 13031 / TMC 1543 / L948) (Mycobacterium abscessus).